Reading from the N-terminus, the 189-residue chain is Peptidyl-tRNA hydrolase (189 aa).

Residue Tyr-16 participates in tRNA binding. The active-site Proton acceptor is the His-21. 3 residues coordinate tRNA: Phe-67, Asn-69, and Asn-115.

Belongs to the PTH family. As to quaternary structure, monomer.

The protein localises to the cytoplasm. It carries out the reaction an N-acyl-L-alpha-aminoacyl-tRNA + H2O = an N-acyl-L-amino acid + a tRNA + H(+). Its function is as follows. Hydrolyzes ribosome-free peptidyl-tRNAs (with 1 or more amino acids incorporated), which drop off the ribosome during protein synthesis, or as a result of ribosome stalling. Functionally, catalyzes the release of premature peptidyl moieties from peptidyl-tRNA molecules trapped in stalled 50S ribosomal subunits, and thus maintains levels of free tRNAs and 50S ribosomes. This is Peptidyl-tRNA hydrolase from Legionella pneumophila (strain Corby).